Reading from the N-terminus, the 90-residue chain is Progonadoliberin-3 (90 aa).

Residues 1-23 (MEASSRVTVQVLLLALVVQVTLS) form the signal peptide. Position 24 is a pyrrolidone carboxylic acid (Q24). G33 carries the glycine amide modification.

The protein belongs to the GnRH family.

It localises to the secreted. In terms of biological role, stimulates the secretion of gonadotropins. The protein is Progonadoliberin-3 (gnrh3) of Sparus aurata (Gilthead sea bream).